A 341-amino-acid chain; its full sequence is Hydrogenase expression/formation protein HupE (341 aa).

This sequence belongs to the HypE family.

May be involved in the maturation of the NifE hydrogenase. The protein is Hydrogenase expression/formation protein HupE (hupE) of Azotobacter chroococcum mcd 1.